The chain runs to 291 residues: ATP synthase gamma chain (291 aa).

It belongs to the ATPase gamma chain family. As to quaternary structure, F-type ATPases have 2 components, CF(1) - the catalytic core - and CF(0) - the membrane proton channel. CF(1) has five subunits: alpha(3), beta(3), gamma(1), delta(1), epsilon(1). CF(0) has three main subunits: a, b and c.

It is found in the cell membrane. Functionally, produces ATP from ADP in the presence of a proton gradient across the membrane. The gamma chain is believed to be important in regulating ATPase activity and the flow of protons through the CF(0) complex. The protein is ATP synthase gamma chain of Lachnoclostridium phytofermentans (strain ATCC 700394 / DSM 18823 / ISDg) (Clostridium phytofermentans).